The sequence spans 207 residues: NADH-quinone oxidoreductase subunit C (207 aa).

The protein belongs to the complex I 30 kDa subunit family. As to quaternary structure, NDH-1 is composed of 14 different subunits. Subunits NuoB, C, D, E, F, and G constitute the peripheral sector of the complex.

It localises to the cell inner membrane. It catalyses the reaction a quinone + NADH + 5 H(+)(in) = a quinol + NAD(+) + 4 H(+)(out). Its function is as follows. NDH-1 shuttles electrons from NADH, via FMN and iron-sulfur (Fe-S) centers, to quinones in the respiratory chain. The immediate electron acceptor for the enzyme in this species is believed to be ubiquinone. Couples the redox reaction to proton translocation (for every two electrons transferred, four hydrogen ions are translocated across the cytoplasmic membrane), and thus conserves the redox energy in a proton gradient. This chain is NADH-quinone oxidoreductase subunit C, found in Rickettsia felis (strain ATCC VR-1525 / URRWXCal2) (Rickettsia azadi).